The following is a 496-amino-acid chain: Cytochrome P450 71D95 (496 aa).

The helical; Signal-anchor transmembrane segment at 2–22 (ELQISSAIIILVATFVASLLI) threads the bilayer. Cys436 is a heme binding site.

Belongs to the cytochrome P450 family. It depends on heme as a cofactor.

It is found in the endoplasmic reticulum membrane. The catalysed reaction is (4S)-limonene + reduced [NADPH--hemoprotein reductase] + O2 = (1S,6R)-isopiperitenol + oxidized [NADPH--hemoprotein reductase] + H2O + H(+). Hydroxylates both (+)- and (-)-limonene to (+) and (-)-trans-isopiperitenol. The polypeptide is Cytochrome P450 71D95 (CYP71D95) (Mentha spicata (Spearmint)).